The sequence spans 399 residues: Elongation factor Tu (399 aa).

One can recognise a tr-type G domain in the interval Lys-10–Val-209. The segment at Gly-19–Thr-26 is G1. Residue Gly-19–Thr-26 coordinates GTP. Thr-26 contacts Mg(2+). The tract at residues Gly-62–Asn-66 is G2. A G3 region spans residues Asp-83 to Gly-86. GTP is bound by residues Asp-83 to His-87 and Asn-138 to Asp-141. The interval Asn-138–Asp-141 is G4. The tract at residues Ser-175–Tyr-177 is G5.

It belongs to the TRAFAC class translation factor GTPase superfamily. Classic translation factor GTPase family. EF-Tu/EF-1A subfamily. In terms of assembly, monomer.

The protein localises to the cytoplasm. The catalysed reaction is GTP + H2O = GDP + phosphate + H(+). GTP hydrolase that promotes the GTP-dependent binding of aminoacyl-tRNA to the A-site of ribosomes during protein biosynthesis. The chain is Elongation factor Tu from Bifidobacterium longum subsp. infantis (strain ATCC 15697 / DSM 20088 / JCM 1222 / NCTC 11817 / S12).